We begin with the raw amino-acid sequence, 89 residues long: Sec-independent protein translocase protein TatA (89 aa).

Residues methionine 1–glycine 21 form a helical membrane-spanning segment. Positions alanine 65–valine 89 are disordered. The span at alanine 76–valine 89 shows a compositional bias: basic and acidic residues.

Belongs to the TatA/E family. As to quaternary structure, the Tat system comprises two distinct complexes: a TatABC complex, containing multiple copies of TatA, TatB and TatC subunits, and a separate TatA complex, containing only TatA subunits. Substrates initially bind to the TatABC complex, which probably triggers association of the separate TatA complex to form the active translocon.

It is found in the cell inner membrane. Functionally, part of the twin-arginine translocation (Tat) system that transports large folded proteins containing a characteristic twin-arginine motif in their signal peptide across membranes. TatA could form the protein-conducting channel of the Tat system. In Shigella flexneri, this protein is Sec-independent protein translocase protein TatA.